The chain runs to 355 residues: Protein RecA (355 aa).

Position 67-74 (Gly67–Thr74) interacts with ATP.

It belongs to the RecA family.

The protein localises to the cytoplasm. In terms of biological role, can catalyze the hydrolysis of ATP in the presence of single-stranded DNA, the ATP-dependent uptake of single-stranded DNA by duplex DNA, and the ATP-dependent hybridization of homologous single-stranded DNAs. It interacts with LexA causing its activation and leading to its autocatalytic cleavage. The polypeptide is Protein RecA (Histophilus somni (strain 2336) (Haemophilus somnus)).